The primary structure comprises 671 residues: cGMP-dependent protein kinase 1 (671 aa).

Serine 2 is modified (N-acetylserine). A coiled-coil region spans residues 2–59 (SELEEDFAKILMLKEERIKELEKRLSEKEEEIQELKRKLHKCQSVLPVPSTHIGPRTT). Positions 2 to 102 (SELEEDFAKI…LIKEAILDND (101 aa)) are required for dimerization. The segment at 9–44 (AKILMLKEERIKELEKRLSEKEEEIQELKRKLHKCQ) is leucine-zipper. Positions 50 to 75 (PSTHIGPRTTRAQGISAEPQTYRSFH) are autoinhibitory domain. At threonine 59 the chain carries Phosphothreonine; by autocatalysis. Residues 103–220 (FMKNLELSQI…EYMEFLKSVP (118 aa)) are cGMP-binding, high affinity. 3',5'-cyclic GMP is bound by residues 167–170 (GELA), 177–178 (RT), arginine 282, 291–294 (GEKA), 301–302 (RT), and tyrosine 336. A cGMP-binding, low affinity region spans residues 221-341 (TFQSLPDEIL…SNKAYEDAEA (121 aa)). A Protein kinase domain is found at 360–619 (FNIIDTLGVG…VKDIQKHKWF (260 aa)). ATP contacts are provided by residues 366–374 (LGVGGFGRV) and lysine 390. The active-site Proton acceptor is the aspartate 484. Threonine 515 is modified (phosphothreonine). The 52-residue stretch at 620–671 (EGFNWEGLRKGTLTPPIIPSVASPTDTSNFDSFPEDSDEPPPDDNSGWDIDF) folds into the AGC-kinase C-terminal domain. The segment at 635–671 (PIIPSVASPTDTSNFDSFPEDSDEPPPDDNSGWDIDF) is disordered. Acidic residues predominate over residues 652 to 661 (FPEDSDEPPP).

It belongs to the protein kinase superfamily. AGC Ser/Thr protein kinase family. cGMP subfamily. Isoform alpha: parallel homodimer or heterodimer and also heterotetramer. Interacts directly with PPP1R12A. Non-covalent dimer of dimer of PRKG1-PRKG1 and PPP1R12A-PPP1R12A. This interaction targets PRKG1 to stress fibers to mediate smooth muscle cell relaxation and vasodilation in responses to rises in cGMP. Isoform beta: antiparallel homodimer. Part of cGMP kinase signaling complex at least composed of ACTA2/alpha-actin, CNN1/calponin H1, PLN/phospholamban, PRKG1 and ITPR1. Interacts with IRAG1. Forms a stable complex with ITPR1, IRAG1, and isoform beta of PRKG1. Interacts with TRPC7 (via ankyrin repeat domain). Isoform alpha interacts with RGS2. Interacts with GTF2I. Autophosphorylation increases kinase activity. In terms of processing, 65 kDa monomer is produced by proteolytic cleavage. In terms of tissue distribution, detected in cerebellum, hippocampus, dorsomedial hypothalamus, medulla, subcommissural organ, cerebral cortex, amygdala, habenulae, various hypothalamic regions, olfactory bulb, pituitary gland, and retina. Isoform alpha is prominent in the cerebellum and medulla, whereas isoform Beta is predominant in the cortex, hippocampus, hypothalamus, and olfactory bulb.

It localises to the cytoplasm. It carries out the reaction L-seryl-[protein] + ATP = O-phospho-L-seryl-[protein] + ADP + H(+). The catalysed reaction is L-threonyl-[protein] + ATP = O-phospho-L-threonyl-[protein] + ADP + H(+). With respect to regulation, in the absence of cGMP, PRKG1 activity is suppressed by autoinhibitory contacts. In terms of biological role, serine/threonine protein kinase that acts as a key mediator of the nitric oxide (NO)/cGMP signaling pathway. GMP binding activates PRKG1, which phosphorylates serines and threonines on many cellular proteins. Numerous protein targets for PRKG1 phosphorylation are implicated in modulating cellular calcium, but the contribution of each of these targets may vary substantially among cell types. Proteins that are phosphorylated by PRKG1 regulate platelet activation and adhesion, smooth muscle contraction, cardiac function, gene expression, feedback of the NO-signaling pathway, and other processes involved in several aspects of the CNS like axon guidance, hippocampal and cerebellar learning, circadian rhythm and nociception. Smooth muscle relaxation is mediated through lowering of intracellular free calcium, by desensitization of contractile proteins to calcium, and by decrease in the contractile state of smooth muscle or in platelet activation. Regulates intracellular calcium levels via several pathways: phosphorylates IRAG1 and inhibits IP3-induced Ca(2+) release from intracellular stores, phosphorylation of KCNMA1 (BKCa) channels decreases intracellular Ca(2+) levels, which leads to increased opening of this channel. PRKG1 phosphorylates the canonical transient receptor potential channel (TRPC) family which inactivates the associated inward calcium current. Another mode of action of NO/cGMP/PKGI signaling involves PKGI-mediated inactivation of the Ras homolog gene family member A (RhoA). Phosphorylation of RHOA by PRKG1 blocks the action of this protein in myriad processes: regulation of RHOA translocation; decreasing contraction; controlling vesicle trafficking, reduction of myosin light chain phosphorylation resulting in vasorelaxation. Activation of PRKG1 by NO signaling also alters gene expression in a number of tissues. In smooth muscle cells, increased cGMP and PRKG1 activity influence expression of smooth muscle-specific contractile proteins, levels of proteins in the NO/cGMP signaling pathway, down-regulation of the matrix proteins osteopontin and thrombospondin-1 to limit smooth muscle cell migration and phenotype. Regulates vasodilator-stimulated phosphoprotein (VASP) functions in platelets and smooth muscle. The sequence is that of cGMP-dependent protein kinase 1 (Prkg1) from Mus musculus (Mouse).